Consider the following 479-residue polypeptide: CBL-interacting serine/threonine-protein kinase 10 (479 aa).

In terms of domain architecture, Protein kinase spans 12-266 (YDVGRLLGQG…IARIRESSWF (255 aa)). ATP is bound by residues 18 to 26 (LGQGTFAKV) and lysine 41. The active-site Proton acceptor is the aspartate 134. The activation loop stretch occupies residues 152–181 (DFGLSALADCKRQDGLLHTTCGTPAYVAPE). The residue at position 156 (serine 156) is a Phosphoserine. Threonine 170 carries the post-translational modification Phosphothreonine. Residues 286–323 (SVEAGTAGTNENGAGPSENGAGPSENGDRVTEENHTDE) form a disordered region. Residues 288-300 (EAGTAGTNENGAG) show a composition bias toward low complexity. The segment covering 311–323 (NGDRVTEENHTDE) has biased composition (basic and acidic residues). The NAF domain occupies 322–346 (DEPTNLNAFDLIALSAGFDLAGLFG). The interval 350–379 (KRESRFTSQKPASVIISKLEEVAQRLKLSI) is PPI. The interval 456 to 479 (SQQETEYQQQQQQEQQEQEEPLKF) is disordered. The segment covering 457-470 (QQETEYQQQQQQEQ) has biased composition (low complexity).

This sequence belongs to the protein kinase superfamily. CAMK Ser/Thr protein kinase family. SNF1 subfamily. Interacts with CBL4/SOS3. Mn(2+) is required as a cofactor. As to expression, mostly expressed in roots.

The enzyme catalyses L-seryl-[protein] + ATP = O-phospho-L-seryl-[protein] + ADP + H(+). The catalysed reaction is L-threonyl-[protein] + ATP = O-phospho-L-threonyl-[protein] + ADP + H(+). CIPK serine-threonine protein kinases interact with CBL proteins. Binding of a CBL protein to the regulatory NAF domain of CIPK protein lead to the activation of the kinase in a calcium-dependent manner. The sequence is that of CBL-interacting serine/threonine-protein kinase 10 (CIPK10) from Arabidopsis thaliana (Mouse-ear cress).